The sequence spans 483 residues: Betaine aldehyde dehydrogenase (483 aa).

K(+) is bound by residues Ile-27 and Asp-93. Position 149 to 151 (149 to 151 (GAW)) interacts with NAD(+). The Charge relay system role is filled by Lys-161. 175–178 (KPSE) provides a ligand contact to NAD(+). Val-179 serves as a coordination point for K(+). 228–231 (SVPT) is an NAD(+) binding site. Residue Val-243 coordinates K(+). The active-site Proton acceptor is the Glu-249. Gly-251, Cys-283, and Glu-380 together coordinate NAD(+). The active-site Nucleophile is the Cys-283. Cys-283 carries the post-translational modification Cysteine sulfenic acid (-SOH). 2 residues coordinate K(+): Lys-450 and Gly-453. Residue Glu-457 is the Charge relay system of the active site.

Belongs to the aldehyde dehydrogenase family. As to quaternary structure, dimer of dimers. It depends on K(+) as a cofactor.

The catalysed reaction is betaine aldehyde + NAD(+) + H2O = glycine betaine + NADH + 2 H(+). It functions in the pathway amine and polyamine biosynthesis; betaine biosynthesis via choline pathway; betaine from betaine aldehyde: step 1/1. Its function is as follows. Involved in the biosynthesis of the osmoprotectant glycine betaine. Catalyzes the irreversible oxidation of betaine aldehyde to the corresponding acid. The protein is Betaine aldehyde dehydrogenase of Cereibacter sphaeroides (strain KD131 / KCTC 12085) (Rhodobacter sphaeroides).